The sequence spans 147 residues: Hemoglobin subunit beta-2 (147 aa).

Val2 carries the N-acetylvaline modification. In terms of domain architecture, Globin spans His3 to His147. Lys18 bears the N6-succinyllysine mark. Tyr42 is modified (phosphotyrosine). Phosphoserine is present on residues Ser45, Ser51, and Ser53. Lys60 carries the N6-succinyllysine modification. 2 residues coordinate heme b: His64 and His93. The residue at position 105 (Arg105) is an Asymmetric dimethylarginine. Residue Thr124 is modified to Phosphothreonine.

The protein belongs to the globin family. In terms of assembly, heterotetramer of two alpha chains and two beta chains. Red blood cells.

Its function is as follows. Involved in oxygen transport from the lung to the various peripheral tissues. The polypeptide is Hemoglobin subunit beta-2 (Hbb-b2) (Mus musculus (Mouse)).